Here is a 221-residue protein sequence, read N- to C-terminus: Ribonuclease 3 (221 aa).

Residues 4-121 enclose the RNase III domain; the sequence is LEQLEKKLGY…LWAAVYIDSG (118 aa). Glu40 serves as a coordination point for Mg(2+). The active site involves Asp44. 2 residues coordinate Mg(2+): Asp107 and Glu110. Glu110 is an active-site residue. The DRBM domain occupies 151–219; sequence DYKTILQEIT…AEELIKLLEE (69 aa).

Belongs to the ribonuclease III family. As to quaternary structure, homodimer. It depends on Mg(2+) as a cofactor.

It is found in the cytoplasm. It carries out the reaction Endonucleolytic cleavage to 5'-phosphomonoester.. Digests double-stranded RNA. Involved in the processing of primary rRNA transcript to yield the immediate precursors to the large and small rRNAs (23S and 16S). Also processes some mRNAs, and tRNAs when they are encoded in the rRNA operon. Probably processes pre-crRNA and tracrRNA of type II CRISPR loci if present in the organism. The polypeptide is Ribonuclease 3 (rnc) (Aquifex aeolicus (strain VF5)).